The chain runs to 537 residues: MPAKFIFVTGGVTSSLGKGITAASLGRLLKSRGLKVAIQKFDPYINIDPGTMSPYQHGEVFVTDDGAETDLDLGHYERFIDISLTKASNVTAGKVYWSVITKERRGDFLGGTVQVIPHITNEIKARLLRVAEESDPDVVITEIGGTVGDIESLPFLEAIRQMKSDIGRDRVLYIHVTLVPYLRAAGEAKTKPTQHSVKELRSIGIQPDIIVCRTERPFSREMEEKIALFCDIDPDAVIQAWDADSIYEVPLMMQEEGLDSIVVERLKLNCGPAQMDDWRAMVAKLKNITRHLEIALVGKYVTLPDAYLSVVESLRHAGMYHNVQVDIRWIYSADLERGGLEQLQDVAGILVPGGFGDRGVEGKIIAARYAREHGIPFLGICLGMQLAVVEFARHVCGLEAANSSEFNPETPHPVIDLLPEQKEIEDKGGTMRLGLYPCRLQPGTRAHQAYGEEIIYERHRHRYEFNNNYRAELTARGMVISGTSPDDRLVEIIELADHPWFVACQFHPEFKSRPNRPHPLFRDFIGAACRRAGGGAG.

The amidoligase domain stretch occupies residues Met-1 to Leu-268. Residue Ser-14 participates in CTP binding. A UTP-binding site is contributed by Ser-14. Residue Ser-15–Ile-20 coordinates ATP. Tyr-55 contributes to the L-glutamine binding site. Asp-72 lines the ATP pocket. Mg(2+) contacts are provided by Asp-72 and Glu-142. Residues Asp-149 to Glu-151, Lys-189 to Gln-194, and Lys-225 contribute to the CTP site. UTP contacts are provided by residues Lys-189 to Gln-194 and Lys-225. A Glutamine amidotransferase type-1 domain is found at Glu-293–Gly-534. Residue Gly-354 participates in L-glutamine binding. Cys-381 (nucleophile; for glutamine hydrolysis) is an active-site residue. L-glutamine is bound by residues Leu-382–Gln-385, Glu-405, and Arg-462. Residues His-507 and Glu-509 contribute to the active site.

Belongs to the CTP synthase family. As to quaternary structure, homotetramer.

It catalyses the reaction UTP + L-glutamine + ATP + H2O = CTP + L-glutamate + ADP + phosphate + 2 H(+). It carries out the reaction L-glutamine + H2O = L-glutamate + NH4(+). The catalysed reaction is UTP + NH4(+) + ATP = CTP + ADP + phosphate + 2 H(+). The protein operates within pyrimidine metabolism; CTP biosynthesis via de novo pathway; CTP from UDP: step 2/2. With respect to regulation, allosterically activated by GTP, when glutamine is the substrate; GTP has no effect on the reaction when ammonia is the substrate. The allosteric effector GTP functions by stabilizing the protein conformation that binds the tetrahedral intermediate(s) formed during glutamine hydrolysis. Inhibited by the product CTP, via allosteric rather than competitive inhibition. Functionally, catalyzes the ATP-dependent amination of UTP to CTP with either L-glutamine or ammonia as the source of nitrogen. Regulates intracellular CTP levels through interactions with the four ribonucleotide triphosphates. This is CTP synthase from Moorella thermoacetica (strain ATCC 39073 / JCM 9320).